We begin with the raw amino-acid sequence, 102 residues long: NADH-quinone oxidoreductase subunit K (102 aa).

A run of 3 helical transmembrane segments spans residues 5–25 (IAHYLTVSAVLFTLGVFGIFL), 31–51 (IVILMSVELILLAVNINFVAF), and 66–86 (FVLTVAAAEAAIGLAILVVFF).

It belongs to the complex I subunit 4L family. NDH-1 is composed of 14 different subunits. Subunits NuoA, H, J, K, L, M, N constitute the membrane sector of the complex.

The protein resides in the cell inner membrane. The catalysed reaction is a quinone + NADH + 5 H(+)(in) = a quinol + NAD(+) + 4 H(+)(out). NDH-1 shuttles electrons from NADH, via FMN and iron-sulfur (Fe-S) centers, to quinones in the respiratory chain. The immediate electron acceptor for the enzyme in this species is believed to be ubiquinone. Couples the redox reaction to proton translocation (for every two electrons transferred, four hydrogen ions are translocated across the cytoplasmic membrane), and thus conserves the redox energy in a proton gradient. This is NADH-quinone oxidoreductase subunit K from Mesorhizobium japonicum (strain LMG 29417 / CECT 9101 / MAFF 303099) (Mesorhizobium loti (strain MAFF 303099)).